Consider the following 173-residue polypeptide: ATP synthase subunit b (173 aa).

The helical transmembrane segment at 12–32 threads the bilayer; it reads LDVNPGLVVWTLITFLVVVLV.

This sequence belongs to the ATPase B chain family. F-type ATPases have 2 components, F(1) - the catalytic core - and F(0) - the membrane proton channel. F(1) has five subunits: alpha(3), beta(3), gamma(1), delta(1), epsilon(1). F(0) has three main subunits: a(1), b(2) and c(10-14). The alpha and beta chains form an alternating ring which encloses part of the gamma chain. F(1) is attached to F(0) by a central stalk formed by the gamma and epsilon chains, while a peripheral stalk is formed by the delta and b chains.

The protein localises to the cell inner membrane. Its function is as follows. F(1)F(0) ATP synthase produces ATP from ADP in the presence of a proton or sodium gradient. F-type ATPases consist of two structural domains, F(1) containing the extramembraneous catalytic core and F(0) containing the membrane proton channel, linked together by a central stalk and a peripheral stalk. During catalysis, ATP synthesis in the catalytic domain of F(1) is coupled via a rotary mechanism of the central stalk subunits to proton translocation. In terms of biological role, component of the F(0) channel, it forms part of the peripheral stalk, linking F(1) to F(0). The polypeptide is ATP synthase subunit b (Leptospira borgpetersenii serovar Hardjo-bovis (strain JB197)).